The following is a 90-amino-acid chain: NELL2-interacting cell ontogeny regulator 1 (90 aa).

Residues 1–28 (MAPALRSLLSPRTLLLLLLSLALLGARA) form the signal peptide.

This sequence belongs to the NICOL family. As to quaternary structure, interacts with NELL2; triggers epididymal differentiation. Interacts with cell surface receptor TFRC; the interaction mediates uptake of NICOL1 into fibroblasts. As to expression, expression is enriched in both male and female reproductive organs, including the testis, epididymis, seminal vesicles, coagulating glands, ovary and uterus, and in various non-reproductive organs such as brain, thymus and liver. In testis, expressed in both germ cells and Sertoli cells. Also expressed at low levels in the kidney. Expressed during neocortex and cerebellum development.

It is found in the secreted. The protein localises to the cytoplasm. The protein resides in the perinuclear region. Functionally, mRNA-binding protein which interacts with a range of target mRNAs including SERPINE1, ACTA2, CCN2 and COL4A1 and may promote extracellular matrix production. Binds to the 3'-UTR of SERPINE1 mRNA and stabilizes the mRNA, possibly by competing for binding with SERBP1 and preventing SERBP1-mediated mRNA degradation. Also binds to the 3'-UTR of ACTA2. Testis-derived lumicrine factor that triggers epididymal differentiation and sperm maturation. This is NELL2-interacting cell ontogeny regulator 1 from Mus musculus (Mouse).